The sequence spans 1099 residues: Glutamine--fructose-6-phosphate aminotransferase [isomerizing] (1099 aa).

The active-site Nucleophile; for GATase activity is Cys-2. The 70-residue stretch at 2–71 folds into the Glutamine amidotransferase type-2; first part domain; sequence CGIIGYIGND…DIDGNIGIGH (70 aa). An HTH cro/C1-type domain is found at 198–253; sequence LRKVREKLGLTRKDVEKLCGVKEIYIVKIETGKLESIEEERLKKLCSLYGINFEEI. The 136-residue stretch at 278–413 folds into the DOD-type homing endonuclease domain; it reads IIGYIIGDGH…IQFLLLRFGI (136 aa). The Glutamine amidotransferase type-2; second part domain maps to 571-723; it reads SRWATHGNVC…DGDVVVIKKK (153 aa). 2 consecutive SIS domains span residues 786–923 and 948–1089; these read LAKC…LLGR and TIKE…VDKP. The active-site For Fru-6P isomerization activity is the Lys-1094.

In the C-terminal section; belongs to the SIS family. GFAT subfamily. In terms of assembly, homodimer. This protein undergoes a protein self splicing that involves a post-translational excision of the intervening region (intein) followed by peptide ligation.

It localises to the cytoplasm. The catalysed reaction is D-fructose 6-phosphate + L-glutamine = D-glucosamine 6-phosphate + L-glutamate. In terms of biological role, catalyzes the first step in hexosamine metabolism, converting fructose-6P into glucosamine-6P using glutamine as a nitrogen source. The sequence is that of Glutamine--fructose-6-phosphate aminotransferase [isomerizing] (glmS) from Methanocaldococcus jannaschii (strain ATCC 43067 / DSM 2661 / JAL-1 / JCM 10045 / NBRC 100440) (Methanococcus jannaschii).